The chain runs to 151 residues: Deoxyuridine 5'-triphosphate nucleotidohydrolase (151 aa).

Substrate contacts are provided by residues 70–72, Asn83, 87–89, and Met97; these read RSG and LID.

This sequence belongs to the dUTPase family. As to quaternary structure, homotrimer. Mg(2+) is required as a cofactor.

The enzyme catalyses dUTP + H2O = dUMP + diphosphate + H(+). It functions in the pathway pyrimidine metabolism; dUMP biosynthesis; dUMP from dCTP (dUTP route): step 2/2. In terms of biological role, this enzyme is involved in nucleotide metabolism: it produces dUMP, the immediate precursor of thymidine nucleotides and it decreases the intracellular concentration of dUTP so that uracil cannot be incorporated into DNA. This is Deoxyuridine 5'-triphosphate nucleotidohydrolase from Escherichia coli (strain K12 / MC4100 / BW2952).